The primary structure comprises 304 residues: UDP-N-acetylenolpyruvoylglucosamine reductase (304 aa).

One can recognise an FAD-binding PCMH-type domain in the interval 33 to 198 (KVGGPVDILL…LRATFNLVNG (166 aa)). Residue Arg-177 is part of the active site. The active-site Proton donor is Ser-227. The active site involves Glu-297.

The protein belongs to the MurB family. Requires FAD as cofactor.

Its subcellular location is the cytoplasm. It catalyses the reaction UDP-N-acetyl-alpha-D-muramate + NADP(+) = UDP-N-acetyl-3-O-(1-carboxyvinyl)-alpha-D-glucosamine + NADPH + H(+). Its pathway is cell wall biogenesis; peptidoglycan biosynthesis. Its function is as follows. Cell wall formation. This is UDP-N-acetylenolpyruvoylglucosamine reductase from Clostridium beijerinckii (strain ATCC 51743 / NCIMB 8052) (Clostridium acetobutylicum).